We begin with the raw amino-acid sequence, 164 residues long: MDMTNAQRLILSNQYKMMTMLDPENAERYRRQQTIVERGFGLQMRELDRDFGEMSEDTCRTIINIMEMHHALQVSWDNLKDKQDLDERRIAFLGFDAATESRYLSYVRFMVNTEGRYTHFDSGTHGFNSQTPMWDKYQRMLAIWQSCPRQYHLSAVEISQIINA.

It belongs to the UPF0304 family.

The polypeptide is UPF0304 protein YE1336 (Yersinia enterocolitica serotype O:8 / biotype 1B (strain NCTC 13174 / 8081)).